Here is a 148-residue protein sequence, read N- to C-terminus: Large ribosomal subunit protein bL9 (148 aa).

This sequence belongs to the bacterial ribosomal protein bL9 family.

Its function is as follows. Binds to the 23S rRNA. The sequence is that of Large ribosomal subunit protein bL9 from Staphylococcus aureus (strain Newman).